The chain runs to 129 residues: Mini-ribonuclease 3-like protein (129 aa).

Residue Asp23 is part of the active site.

This sequence belongs to the MrnC RNase family.

Its function is as follows. Might be a ribonuclease involved in RNA processing. This is Mini-ribonuclease 3-like protein (mrnCL) from Fusobacterium nucleatum subsp. nucleatum (strain ATCC 25586 / DSM 15643 / BCRC 10681 / CIP 101130 / JCM 8532 / KCTC 2640 / LMG 13131 / VPI 4355).